A 486-amino-acid polypeptide reads, in one-letter code: Cardiolipin synthase A (486 aa).

2 consecutive transmembrane segments (helical) span residues 3-23 and 38-58; these read IFYNLIKCLIFSTYWLLIANI and MSWLLTIYIIPFIGISIWFFF. 2 consecutive PLD phosphodiesterase domains span residues 219–246 and 399–426; these read VDVRQHRKIILIDNYIAYSGSMNLVDPY and QKGLLHSKSILVDQQLSLIGTVNLDMRS. Active-site residues include histidine 224, lysine 226, aspartate 231, histidine 404, lysine 406, and aspartate 411.

This sequence belongs to the phospholipase D family. Cardiolipin synthase subfamily. ClsA sub-subfamily.

It localises to the cell inner membrane. The enzyme catalyses 2 a 1,2-diacyl-sn-glycero-3-phospho-(1'-sn-glycerol) = a cardiolipin + glycerol. Its function is as follows. Catalyzes the reversible phosphatidyl group transfer from one phosphatidylglycerol molecule to another to form cardiolipin (CL) (diphosphatidylglycerol) and glycerol. This chain is Cardiolipin synthase A, found in Buchnera aphidicola subsp. Acyrthosiphon pisum (strain APS) (Acyrthosiphon pisum symbiotic bacterium).